A 283-amino-acid polypeptide reads, in one-letter code: NFU1 iron-sulfur cluster scaffold homolog, mitochondrial (283 aa).

The N-terminal 65 residues, methionine 1–arginine 65, are a transit peptide targeting the mitochondrion. The nifU stretch occupies residues isoleucine 182–valine 250. [4Fe-4S] cluster contacts are provided by cysteine 219 and cysteine 222.

This sequence belongs to the NifU family.

The protein resides in the mitochondrion. Molecular scaffold for [Fe-S] cluster assembly of mitochondrial iron-sulfur proteins. This chain is NFU1 iron-sulfur cluster scaffold homolog, mitochondrial, found in Drosophila simulans (Fruit fly).